The chain runs to 202 residues: MMIVLMLLLAYIVGSFPSGVIIGKIFFKKDIRQFGSGNTGATNSFRVLGRPAGFVVTFLDIFKGFIVVFFPLLFPVHPTGPISEFFTNGLIVGVFAILGHVYPIFLKFHGGKAVATSAGVVLGVAPILLLILAAIFFLTLYLTKYVSLSSIVAAICCVIGSLIIHDYILLVVSIIVAILLIFRHRTNIVRIFKGEEPKIKWM.

6 helical membrane passes run 2 to 22, 54 to 74, 85 to 105, 118 to 138, 140 to 160, and 162 to 182; these read MIVL…GVII, FVVT…PLLF, FFTN…YPIF, AGVV…IFFL, LYLT…CVIG, and LIIH…LLIF.

The protein belongs to the PlsY family. As to quaternary structure, probably interacts with PlsX.

The protein localises to the cell membrane. The catalysed reaction is an acyl phosphate + sn-glycerol 3-phosphate = a 1-acyl-sn-glycero-3-phosphate + phosphate. The protein operates within lipid metabolism; phospholipid metabolism. Catalyzes the transfer of an acyl group from acyl-phosphate (acyl-PO(4)) to glycerol-3-phosphate (G3P) to form lysophosphatidic acid (LPA). This enzyme utilizes acyl-phosphate as fatty acyl donor, but not acyl-CoA or acyl-ACP. The polypeptide is Glycerol-3-phosphate acyltransferase (Staphylococcus carnosus (strain TM300)).